The sequence spans 51 residues: MNIAKLLGVISFICWIVACVLTICIDASSVFSQALAQGMCAYLTFVLLSND.

The next 2 membrane-spanning stretches (helical) occupy residues Leu-6–Asp-26 and Ser-28–Leu-48.

It localises to the host membrane. This is an uncharacterized protein from Enterobacteria phage T4 (Bacteriophage T4).